The following is a 68-amino-acid chain: Galectin-10 (68 aa).

A Galectin domain is found at 1 to 68; it reads EPYLQVDFHT…LSISVLPDKY (68 aa).

As to quaternary structure, interacts with CEL.

The protein localises to the cytoplasm. The protein resides in the cytosol. It is found in the cytoplasmic granule. In terms of biological role, regulates immune responses through the recognition of cell-surface glycans. Essential for the anergy and suppressive function of CD25-positive regulatory T-cells (Treg). The polypeptide is Galectin-10 (CLC) (Pongo pygmaeus (Bornean orangutan)).